The sequence spans 194 residues: Adenylate kinase (194 aa).

11 to 16 is a binding site for ATP; it reads GSGKGT. Positions 31–60 are NMP; that stretch reads STGELLRAEIKAQTELGQAAAGYINEGHLV. Residues T32, R37, 58–60, 86–89, and Q93 each bind AMP; these read HLV and GFPR. An LID region spans residues 127–137; that stretch reads NRGKISGRSDD. R128 lines the ATP pocket. AMP is bound by residues R134 and R145. ATP is bound at residue G173.

Belongs to the adenylate kinase family. As to quaternary structure, monomer.

It localises to the cytoplasm. It carries out the reaction AMP + ATP = 2 ADP. It functions in the pathway purine metabolism; AMP biosynthesis via salvage pathway; AMP from ADP: step 1/1. In terms of biological role, catalyzes the reversible transfer of the terminal phosphate group between ATP and AMP. Plays an important role in cellular energy homeostasis and in adenine nucleotide metabolism. The sequence is that of Adenylate kinase from Porphyromonas gingivalis (strain ATCC 33277 / DSM 20709 / CIP 103683 / JCM 12257 / NCTC 11834 / 2561).